A 258-amino-acid chain; its full sequence is Hemin import ATP-binding protein HmuV (258 aa).

Residues 2–242 (LTAEKLCVER…SKIEELYDFP (241 aa)) form the ABC transporter domain. Position 34 to 41 (34 to 41 (GANGAGKS)) interacts with ATP.

The protein belongs to the ABC transporter superfamily. Heme (hemin) importer (TC 3.A.1.14.5) family. The complex is composed of two ATP-binding proteins (HmuV), two transmembrane proteins (HmuU) and a solute-binding protein (HmuT).

It is found in the cell inner membrane. In terms of biological role, part of the ABC transporter complex HmuTUV involved in hemin import. Responsible for energy coupling to the transport system. In Hydrogenovibrio crunogenus (strain DSM 25203 / XCL-2) (Thiomicrospira crunogena), this protein is Hemin import ATP-binding protein HmuV.